Consider the following 608-residue polypeptide: Mitogen-activated protein kinase kinase kinase 1 (608 aa).

A compositionally biased stretch (basic residues) spans 1–13 (MDRILARMKKSTG). The disordered stretch occupies residues 1 to 20 (MDRILARMKKSTGRRGGDKN). Residues 1-325 (MDRILARMKK…VSNTSPIYPD (325 aa)) form a regulatory region region. Ser-62 is modified (phosphoserine). The interval 192 to 234 (MERTPTIVKSKGYLVPNNVVAVGVGVGGGIKGLRPPVLKPPPA) is binding with MPK4. 2 disordered regions span residues 228-247 (VLKP…GSSW) and 256-287 (SETV…EAEE). A compositionally biased stretch (acidic residues) spans 271-287 (DGCDEEEGKEEEAEAEE). In terms of domain architecture, Protein kinase spans 333–587 (WQKGQLLGRG…AAELLNHPFV (255 aa)). Residues 339 to 347 (LGRGSFGSV) and Lys-361 contribute to the ATP site. Residue Asp-456 is the Proton acceptor of the active site. At Ser-603 the chain carries Phosphoserine.

This sequence belongs to the protein kinase superfamily. STE Ser/Thr protein kinase family. MAP kinase kinase kinase subfamily. As to quaternary structure, interacts with MKK1, MMK2 and MPK4. May form a ternary complex composed of MEKK1 and MKK1/MKK2 and MPK4. Interacts with RACK1A, RACK1B and RACK1C. Binds to CRLK1. Phosphorylated by CRLK1 in response to cold.

The protein resides in the cell membrane. It is found in the endosome. It carries out the reaction L-seryl-[protein] + ATP = O-phospho-L-seryl-[protein] + ADP + H(+). The catalysed reaction is L-threonyl-[protein] + ATP = O-phospho-L-threonyl-[protein] + ADP + H(+). Activated by cold via CRLK1-mediated phosphorylation and leading to elevated kinase activity towards MKK2. In terms of biological role, the MEKK1, MKK1/MKK2 and MPK4 function in a signaling pathway that modulates the expression of genes responding to biotic and abiotic stresses and also plays an important role in pathogen defense by negatively regulating innate immunity. Involved in the innate immune MAP kinase signaling cascade (MEKK1, MKK4/MKK5 and MPK3/MPK6) downstream of bacterial flagellin receptor FLS2. May be involved in the cold and salinity stress-mediated MAP kinase signaling cascade (MEKK1, MKK1/MKK2 and MPK4/MPK6). Activates by phosphorylation the downstream MKK2, MKK4 and MKK5 in a calcium-dependent manner. In Arabidopsis thaliana (Mouse-ear cress), this protein is Mitogen-activated protein kinase kinase kinase 1 (MEKK1).